The sequence spans 227 residues: Triosephosphate isomerase (227 aa).

9 to 11 (NFK) is a substrate binding site. The active-site Electrophile is His93. The active-site Proton acceptor is Glu141. Substrate-binding positions include Ile146, Gly180, and 201 to 202 (AS).

It belongs to the triosephosphate isomerase family. In terms of assembly, homotetramer; dimer of dimers.

The protein localises to the cytoplasm. It carries out the reaction D-glyceraldehyde 3-phosphate = dihydroxyacetone phosphate. The protein operates within carbohydrate biosynthesis; gluconeogenesis. It participates in carbohydrate degradation; glycolysis; D-glyceraldehyde 3-phosphate from glycerone phosphate: step 1/1. Involved in the gluconeogenesis. Catalyzes stereospecifically the conversion of dihydroxyacetone phosphate (DHAP) to D-glyceraldehyde-3-phosphate (G3P). The protein is Triosephosphate isomerase of Saccharolobus solfataricus (strain ATCC 35092 / DSM 1617 / JCM 11322 / P2) (Sulfolobus solfataricus).